The primary structure comprises 238 residues: CD63 antigen (238 aa).

The Cytoplasmic segment spans residues Met1–Lys11. A helical membrane pass occupies residues Phe12–Gly32. At Val33 to Ser51 the chain is on the extracellular side. The helical transmembrane segment at Leu52–Cys72 threads the bilayer. Over Cys73–Cys81 the chain is Cytoplasmic. A helical transmembrane segment spans residues Leu82–Ile102. Topologically, residues Ala103–Val203 are extracellular. Asn125, Asn130, Asn150, and Asn172 each carry an N-linked (GlcNAc...) asparagine glycan. The chain crosses the membrane as a helical span at residues Leu204 to Ala224. At Cys225–Met238 the chain is on the cytoplasmic side. The short motif at Gly234 to Met238 is the Lysosomal targeting motif element.

Belongs to the tetraspanin (TM4SF) family. Interacts with TIMP1 and ITGB1 and recruits TIMP1 to ITGB1. Interacts with CD9. Identified in a complex with CD9 and ITGB3. Interacts with PMEL. Interacts with KDR/VEGFR2; identified in a complex with ITGB1 and KDR/VEGFR2 and is required to recruit KDR to ITGB1 complexes. Interacts with SYT7. In terms of processing, palmitoylated at a low, basal level in unstimulated platelets. The level of palmitoylation increases when platelets are activated by thrombin (in vitro).

The protein resides in the cell membrane. Its subcellular location is the lysosome membrane. It localises to the late endosome membrane. It is found in the endosome. The protein localises to the multivesicular body. The protein resides in the melanosome. Its subcellular location is the secreted. It localises to the extracellular exosome. It is found in the cell surface. In terms of biological role, functions as a cell surface receptor for TIMP1 and plays a role in the activation of cellular signaling cascades. Plays a role in the activation of ITGB1 and integrin signaling, leading to the activation of AKT, FAK/PTK2 and MAP kinases. Promotes cell survival, reorganization of the actin cytoskeleton, cell adhesion, spreading and migration, via its role in the activation of AKT and FAK/PTK2. Plays a role in VEGFA signaling via its role in regulating the internalization of KDR/VEGFR2. Plays a role in intracellular vesicular transport processes, and is required for normal trafficking of the PMEL luminal domain that is essential for the development and maturation of melanocytes. Plays a role in the adhesion of leukocytes onto endothelial cells via its role in the regulation of SELP trafficking. May play a role in mast cell degranulation in response to Ms4a2/FceRI stimulation, but not in mast cell degranulation in response to other stimuli. The polypeptide is CD63 antigen (CD63) (Oryctolagus cuniculus (Rabbit)).